Consider the following 141-residue polypeptide: Large ribosomal subunit protein uL11 (141 aa).

It belongs to the universal ribosomal protein uL11 family. Part of the ribosomal stalk of the 50S ribosomal subunit. Interacts with L10 and the large rRNA to form the base of the stalk. L10 forms an elongated spine to which L12 dimers bind in a sequential fashion forming a multimeric L10(L12)X complex. Post-translationally, one or more lysine residues are methylated.

In terms of biological role, forms part of the ribosomal stalk which helps the ribosome interact with GTP-bound translation factors. The chain is Large ribosomal subunit protein uL11 from Carboxydothermus hydrogenoformans (strain ATCC BAA-161 / DSM 6008 / Z-2901).